Here is a 560-residue protein sequence, read N- to C-terminus: Probable methionine--tRNA ligase, cytoplasmic (560 aa).

The short motif at 16–26 (PYVNNQPHLGN) is the 'HIGH' region element. Residues 347-351 (KFSKS) carry the 'KMSKS' region motif. Position 350 (lysine 350) interacts with ATP.

The protein belongs to the class-I aminoacyl-tRNA synthetase family.

Its subcellular location is the cytoplasm. The catalysed reaction is tRNA(Met) + L-methionine + ATP = L-methionyl-tRNA(Met) + AMP + diphosphate. The polypeptide is Probable methionine--tRNA ligase, cytoplasmic (Vairimorpha ceranae (strain BRL01) (Microsporidian parasite)).